A 308-amino-acid chain; its full sequence is Protoheme IX farnesyltransferase (308 aa).

A run of 8 helical transmembrane segments spans residues 31–51 (VIEL…RGTV), 53–73 (PLLI…ANAL), 102–122 (NALV…WWTT), 124–144 (LLSG…YTLL), 149–169 (TSQN…IGWS), 170–190 (AVTG…FFWT), 240–260 (LALA…VWFL), and 288–308 (YLAV…PHLF).

This sequence belongs to the UbiA prenyltransferase family. Protoheme IX farnesyltransferase subfamily.

The protein localises to the cell membrane. It carries out the reaction heme b + (2E,6E)-farnesyl diphosphate + H2O = Fe(II)-heme o + diphosphate. Its pathway is porphyrin-containing compound metabolism; heme O biosynthesis; heme O from protoheme: step 1/1. Functionally, converts heme B (protoheme IX) to heme O by substitution of the vinyl group on carbon 2 of heme B porphyrin ring with a hydroxyethyl farnesyl side group. This Mycolicibacterium paratuberculosis (strain ATCC BAA-968 / K-10) (Mycobacterium paratuberculosis) protein is Protoheme IX farnesyltransferase.